The following is a 144-amino-acid chain: Testis-specific protein TSX (144 aa).

3 disordered regions span residues 1–21 (MSEKQSPKTSEAECSAMDLPE), 69–99 (EDRVSSTDDEDTCQAGCTEDDETSHSDRDID), and 120–144 (FTDQNPQADQDLEETESDGAMNPTD). Residues 75–90 (TDDEDTCQAGCTEDDE) show a composition bias toward acidic residues.

As to expression, testis.

Its function is as follows. May have an RNA/DNA binding role. The protein is Testis-specific protein TSX (Tsx) of Mus musculus (Mouse).